The primary structure comprises 181 residues: Transmembrane protein 47 (181 aa).

Residue Ala-2 is modified to N-acetylalanine. 4 consecutive transmembrane segments (helical) span residues 21–41 (LVGL…VLSP), 83–103 (ALLL…LISI), 115–135 (VAVM…LYPI), and 152–172 (GYGL…LYCL).

This sequence belongs to the TMEM47 family. Interacts with CTNNB1, CTNNA1, PRKCI, PARD6B, FYB1. As to expression, expressed in adult brain, fetal brain, cerebellum, heart, lung, prostate and thyroid.

It localises to the membrane. Its subcellular location is the cell junction. It is found in the adherens junction. Regulates cell junction organization in epithelial cells. May play a role in the transition from adherens junction to tight junction assembly. May regulate F-actin polymerization required for tight junctional localization dynamics and affect the junctional localization of PARD6B. During podocyte differentiation may negatively regulate activity of FYN and subsequently the abundance of nephrin. This is Transmembrane protein 47 (TMEM47) from Homo sapiens (Human).